The sequence spans 600 residues: tRNA uridine 5-carboxymethylaminomethyl modification enzyme MnmG (600 aa).

10–15 (GGGHAG) is a binding site for FAD. Positions 216 to 239 (ADPQPRGFTGTPGPRAAESPTWQT) are disordered. 267–281 (GPRYCPSIEDKVVKF) provides a ligand contact to NAD(+).

Belongs to the MnmG family. Homodimer. Heterotetramer of two MnmE and two MnmG subunits. Requires FAD as cofactor.

It is found in the cytoplasm. In terms of biological role, NAD-binding protein involved in the addition of a carboxymethylaminomethyl (cmnm) group at the wobble position (U34) of certain tRNAs, forming tRNA-cmnm(5)s(2)U34. The protein is tRNA uridine 5-carboxymethylaminomethyl modification enzyme MnmG of Deinococcus radiodurans (strain ATCC 13939 / DSM 20539 / JCM 16871 / CCUG 27074 / LMG 4051 / NBRC 15346 / NCIMB 9279 / VKM B-1422 / R1).